The sequence spans 490 residues: ATP synthase subunit beta, chloroplastic (490 aa).

Residue 170–177 (GGAGVGKT) participates in ATP binding.

The protein belongs to the ATPase alpha/beta chains family. F-type ATPases have 2 components, CF(1) - the catalytic core - and CF(0) - the membrane proton channel. CF(1) has five subunits: alpha(3), beta(3), gamma(1), delta(1), epsilon(1). CF(0) has four main subunits: a(1), b(1), b'(1) and c(9-12).

The protein localises to the plastid. The protein resides in the chloroplast thylakoid membrane. The catalysed reaction is ATP + H2O + 4 H(+)(in) = ADP + phosphate + 5 H(+)(out). In terms of biological role, produces ATP from ADP in the presence of a proton gradient across the membrane. The catalytic sites are hosted primarily by the beta subunits. The sequence is that of ATP synthase subunit beta, chloroplastic from Ipomoea wrightii (Wright's morning glory).